The primary structure comprises 74 residues: Brevinin-2Tb (74 aa).

The first 22 residues, 1-22, serve as a signal peptide directing secretion; sequence MFTMKKSLLLFFFLGTISLSLC. Positions 23–40 are excised as a propeptide; that stretch reads QEERNADEDDGEMTEEEK. Residues C68 and C74 are joined by a disulfide bond.

The protein belongs to the frog skin active peptide (FSAP) family. Brevinin subfamily. As to expression, expressed by the skin glands.

It is found in the secreted. In terms of biological role, antimicrobial peptide. This Rana temporaria (European common frog) protein is Brevinin-2Tb.